A 317-amino-acid polypeptide reads, in one-letter code: Putative HTH-type transcriptional regulatory protein Mlab_0160 (317 aa).

Positions 132 to 189 (LRTLREEQAMSLGDLAHALGVSRRTISKYEGGMGTTLEMAMRLEEFFNDDIVMPIDLL) constitute an HTH cro/C1-type domain. A DNA-binding region (H-T-H motif) is located at residues 143 to 162 (LGDLAHALGVSRRTISKYEG). The tract at residues 199–219 (VPASLASGHNPESDAQPKRPE) is disordered. The span at 209-219 (PESDAQPKRPE) shows a compositional bias: basic and acidic residues.

The protein is Putative HTH-type transcriptional regulatory protein Mlab_0160 of Methanocorpusculum labreanum (strain ATCC 43576 / DSM 4855 / Z).